A 398-amino-acid chain; its full sequence is Enoyl-[acyl-carrier-protein] reductase [NADH] (398 aa).

NAD(+) is bound by residues 48 to 53 (GSSTGY), 74 to 75 (FE), 111 to 112 (DA), and 139 to 140 (LA). Tyr225 provides a ligand contact to substrate. Residue Tyr235 is the Proton donor of the active site. Residues Lys244 and 273–275 (VVT) each bind NAD(+).

It belongs to the TER reductase family. As to quaternary structure, monomer.

The enzyme catalyses a 2,3-saturated acyl-[ACP] + NAD(+) = a (2E)-enoyl-[ACP] + NADH + H(+). It participates in lipid metabolism; fatty acid biosynthesis. Its function is as follows. Involved in the final reduction of the elongation cycle of fatty acid synthesis (FAS II). Catalyzes the reduction of a carbon-carbon double bond in an enoyl moiety that is covalently linked to an acyl carrier protein (ACP). The protein is Enoyl-[acyl-carrier-protein] reductase [NADH] of Pseudomonas paraeruginosa (strain DSM 24068 / PA7) (Pseudomonas aeruginosa (strain PA7)).